Here is a 63-residue protein sequence, read N- to C-terminus: MAEVSLGMLIDIVDEEWMRDTLPDDDLPLPPVLAVKTDDTEETNQETQQADAETWRDLALDTQ.

The interval 36 to 63 (KTDDTEETNQETQQADAETWRDLALDTQ) is disordered. Residues 53–63 (ETWRDLALDTQ) show a composition bias toward basic and acidic residues.

The protein belongs to the APC13 family. As to quaternary structure, component of the anaphase promoting complex/cyclosome (APC/C) complex. Expressed constitutively in roots, leaves, stems, buds, flowers, and seeds.

Its subcellular location is the nucleus. The protein operates within protein modification; protein ubiquitination. In terms of biological role, component of the anaphase promoting complex/cyclosome (APC/C), a cell cycle-regulated E3 ubiquitin ligase that controls progression through mitosis and the G1 phase of the cell cycle. The APC/C complex acts by mediating ubiquitination and subsequent degradation of target proteins. Regulates global growth and development, including phyllotaxis and apical dominance. Required for pollen maturation. Promotes (pri) miRNA transcription of each MIR159 genes. This Arabidopsis thaliana (Mouse-ear cress) protein is Anaphase-promoting complex subunit 13.